Here is a 257-residue protein sequence, read N- to C-terminus: 5'-nucleotidase SurE (257 aa).

The a divalent metal cation site is built by Asp-8, Asp-9, Ser-40, and Asn-92.

This sequence belongs to the SurE nucleotidase family. A divalent metal cation serves as cofactor.

The protein localises to the cytoplasm. It catalyses the reaction a ribonucleoside 5'-phosphate + H2O = a ribonucleoside + phosphate. Nucleotidase that shows phosphatase activity on nucleoside 5'-monophosphates. This chain is 5'-nucleotidase SurE, found in Rhizobium rhizogenes (strain K84 / ATCC BAA-868) (Agrobacterium radiobacter).